The following is a 291-amino-acid chain: Protease HtpX homolog (291 aa).

Transmembrane regions (helical) follow at residues 4–24 and 38–58; these read VFLF…SARL and MGML…ISLL. Position 144 (histidine 144) interacts with Zn(2+). Glutamate 145 is an active-site residue. Histidine 148 is a Zn(2+) binding site. A run of 2 helical transmembrane segments spans residues 159-179 and 199-219; these read LIQG…AYAL and ISSI…VMYF. A Zn(2+)-binding site is contributed by glutamate 224.

Belongs to the peptidase M48B family. Zn(2+) serves as cofactor.

It localises to the cell inner membrane. This is Protease HtpX homolog from Chlorobium phaeovibrioides (strain DSM 265 / 1930) (Prosthecochloris vibrioformis (strain DSM 265)).